The following is a 587-amino-acid chain: Glutathione hydrolase proenzyme (587 aa).

The signal sequence occupies residues 1–28 (MKRTWNVCLTALLSVLLVAGSVPFHAEA). A propeptide spanning residues 29–35 (KKPPKSY) is cleaved from the precursor. Arg-113 serves as a coordination point for L-glutamate. Thr-403 functions as the Nucleophile in the catalytic mechanism. L-glutamate contacts are provided by residues Thr-421, Glu-423, Glu-442, Asp-445, 464-465 (SS), and 485-486 (GG).

The protein belongs to the gamma-glutamyltransferase family. This enzyme consists of two polypeptide chains, which are synthesized in precursor form from a single polypeptide. Post-translationally, cleaved by autocatalysis into a large and small subunit.

It localises to the secreted. It catalyses the reaction an N-terminal (5-L-glutamyl)-[peptide] + an alpha-amino acid = 5-L-glutamyl amino acid + an N-terminal L-alpha-aminoacyl-[peptide]. It carries out the reaction glutathione + H2O = L-cysteinylglycine + L-glutamate. The catalysed reaction is an S-substituted glutathione + H2O = an S-substituted L-cysteinylglycine + L-glutamate. Its pathway is sulfur metabolism; glutathione metabolism. Its activity is regulated as follows. Inhibited by glucose. Cleaves the gamma-glutamyl bond of extracellular glutathione (gamma-Glu-Cys-Gly), glutathione conjugates, and other gamma-glutamyl compounds. The metabolism of glutathione releases free glutamate and the dipeptide cysteinyl-glycine, which is hydrolyzed to cysteine and glycine by dipeptidases. Uses glutamine as a gamma-glutamyl donor and acceptor for gamma-polyglutamic acid synthesis. Dipeptides are better gamma-glutamyl acceptors than free amino acids. The protein is Glutathione hydrolase proenzyme (ggt) of Bacillus subtilis subsp. natto.